The sequence spans 726 residues: Prolyl endopeptidase-like (726 aa).

At Ser-138 the chain carries Phosphoserine. Catalysis depends on charge relay system residues Ser-558, Asp-644, and His-689.

This sequence belongs to the peptidase S9A family. As to quaternary structure, homodimer. Interacts with the AP-1 complex.

Its subcellular location is the cytoplasm. It is found in the cytosol. The protein localises to the golgi apparatus. It localises to the trans-Golgi network. The protein resides in the cytoskeleton. Its subcellular location is the nucleus. In terms of biological role, serine peptidase whose precise substrate specificity remains unclear. Does not cleave peptides after a arginine or lysine residue. Regulates trans-Golgi network morphology and sorting by regulating the membrane binding of the AP-1 complex. May play a role in the regulation of synaptic vesicle exocytosis. This chain is Prolyl endopeptidase-like (Prepl), found in Rattus norvegicus (Rat).